The sequence spans 233 residues: Biosynthetic peptidoglycan transglycosylase (233 aa).

Residues 17–37 (IVLAVLALVILPYALIFFYVL) traverse the membrane as a helical segment.

It belongs to the glycosyltransferase 51 family.

It localises to the cell inner membrane. It catalyses the reaction [GlcNAc-(1-&gt;4)-Mur2Ac(oyl-L-Ala-gamma-D-Glu-L-Lys-D-Ala-D-Ala)](n)-di-trans,octa-cis-undecaprenyl diphosphate + beta-D-GlcNAc-(1-&gt;4)-Mur2Ac(oyl-L-Ala-gamma-D-Glu-L-Lys-D-Ala-D-Ala)-di-trans,octa-cis-undecaprenyl diphosphate = [GlcNAc-(1-&gt;4)-Mur2Ac(oyl-L-Ala-gamma-D-Glu-L-Lys-D-Ala-D-Ala)](n+1)-di-trans,octa-cis-undecaprenyl diphosphate + di-trans,octa-cis-undecaprenyl diphosphate + H(+). It functions in the pathway cell wall biogenesis; peptidoglycan biosynthesis. Functionally, peptidoglycan polymerase that catalyzes glycan chain elongation from lipid-linked precursors. This chain is Biosynthetic peptidoglycan transglycosylase, found in Rhizobium leguminosarum bv. trifolii (strain WSM2304).